The primary structure comprises 188 residues: Elongation factor P 1 (188 aa).

This sequence belongs to the elongation factor P family.

Its subcellular location is the cytoplasm. It functions in the pathway protein biosynthesis; polypeptide chain elongation. Functionally, involved in peptide bond synthesis. Stimulates efficient translation and peptide-bond synthesis on native or reconstituted 70S ribosomes in vitro. Probably functions indirectly by altering the affinity of the ribosome for aminoacyl-tRNA, thus increasing their reactivity as acceptors for peptidyl transferase. This chain is Elongation factor P 1 (efp1), found in Porphyromonas gingivalis (strain ATCC BAA-308 / W83).